The primary structure comprises 182 residues: Small ribosomal subunit protein uS4c (182 aa).

Residues 82 to 143 enclose the S4 RNA-binding domain; sequence MRLDNILFRL…KERSKVLIQN (62 aa).

This sequence belongs to the universal ribosomal protein uS4 family. Part of the 30S ribosomal subunit. Contacts protein S5. The interaction surface between S4 and S5 is involved in control of translational fidelity.

Its subcellular location is the plastid. It is found in the chloroplast. In terms of biological role, one of the primary rRNA binding proteins, it binds directly to 16S rRNA where it nucleates assembly of the body of the 30S subunit. Functionally, with S5 and S12 plays an important role in translational accuracy. The polypeptide is Small ribosomal subunit protein uS4c (rps4) (Neomarica sp. (strain Lejeune 1997)).